The chain runs to 132 residues: MNDTVTVRTRKFMTNRLLQRKQMVVDVLHPGKATVPKTEIREKLAKMYKTTPDVVFVFGFRTQFGGGKTTGFAMVYDSLDYAKKNEPKHRLARHGLFEKKKTSRKQRKERKNRMKKVRGTKKASVGASKKKD.

Positions 90–100 (RLARHGLFEKK) are enriched in basic and acidic residues. The disordered stretch occupies residues 90 to 132 (RLARHGLFEKKKTSRKQRKERKNRMKKVRGTKKASVGASKKKD). Positions 101–121 (KTSRKQRKERKNRMKKVRGTK) are enriched in basic residues.

The protein belongs to the eukaryotic ribosomal protein eS24 family. Component of the small ribosomal subunit.

It is found in the cytoplasm. In terms of biological role, component of the small ribosomal subunit. The ribosome is a large ribonucleoprotein complex responsible for the synthesis of proteins in the cell. Required for processing of pre-rRNA and maturation of 40S ribosomal subunits. This Takifugu rubripes (Japanese pufferfish) protein is Small ribosomal subunit protein eS24 (rps24).